The sequence spans 333 residues: tRNA-modifying protein YgfZ (333 aa).

Folate is bound by residues Trp-33 and Trp-195.

This sequence belongs to the tRNA-modifying YgfZ family.

It is found in the cytoplasm. Functionally, folate-binding protein involved in regulating the level of ATP-DnaA and in the modification of some tRNAs. It is probably a key factor in regulatory networks that act via tRNA modification, such as initiation of chromosomal replication. The polypeptide is tRNA-modifying protein YgfZ (Pectobacterium atrosepticum (strain SCRI 1043 / ATCC BAA-672) (Erwinia carotovora subsp. atroseptica)).